Reading from the N-terminus, the 445-residue chain is Trigger factor (445 aa).

The 86-residue stretch at 162–247 (GDQVTIDAIG…IKAVHTAEPT (86 aa)) folds into the PPIase FKBP-type domain.

This sequence belongs to the FKBP-type PPIase family. Tig subfamily.

The protein resides in the cytoplasm. It carries out the reaction [protein]-peptidylproline (omega=180) = [protein]-peptidylproline (omega=0). Its function is as follows. Involved in protein export. Acts as a chaperone by maintaining the newly synthesized protein in an open conformation. Functions as a peptidyl-prolyl cis-trans isomerase. This is Trigger factor from Rickettsia africae (strain ESF-5).